The sequence spans 485 residues: UDP-N-acetylmuramoyl-L-alanyl-D-glutamate--2,6-diaminopimelate ligase (485 aa).

UDP-N-acetyl-alpha-D-muramoyl-L-alanyl-D-glutamate is bound at residue Ser28. Residue 108-114 (GTNGKTS) participates in ATP binding. UDP-N-acetyl-alpha-D-muramoyl-L-alanyl-D-glutamate-binding positions include Asn147, 148–149 (TT), Ser175, and Arg183. An N6-carboxylysine modification is found at Lys215. Meso-2,6-diaminopimelate contacts are provided by residues Arg374, 398–401 (DNPR), Gly449, and Glu453. The Meso-diaminopimelate recognition motif motif lies at 398–401 (DNPR).

This sequence belongs to the MurCDEF family. MurE subfamily. The cofactor is Mg(2+). Post-translationally, carboxylation is probably crucial for Mg(2+) binding and, consequently, for the gamma-phosphate positioning of ATP.

The protein localises to the cytoplasm. It catalyses the reaction UDP-N-acetyl-alpha-D-muramoyl-L-alanyl-D-glutamate + meso-2,6-diaminopimelate + ATP = UDP-N-acetyl-alpha-D-muramoyl-L-alanyl-gamma-D-glutamyl-meso-2,6-diaminopimelate + ADP + phosphate + H(+). The protein operates within cell wall biogenesis; peptidoglycan biosynthesis. Catalyzes the addition of meso-diaminopimelic acid to the nucleotide precursor UDP-N-acetylmuramoyl-L-alanyl-D-glutamate (UMAG) in the biosynthesis of bacterial cell-wall peptidoglycan. The sequence is that of UDP-N-acetylmuramoyl-L-alanyl-D-glutamate--2,6-diaminopimelate ligase from Fusobacterium nucleatum subsp. nucleatum (strain ATCC 25586 / DSM 15643 / BCRC 10681 / CIP 101130 / JCM 8532 / KCTC 2640 / LMG 13131 / VPI 4355).